The primary structure comprises 209 residues: GTP-binding protein RHO1 (209 aa).

Ser-2 is modified (N-acetylserine). Residue 17–24 (GDGACGKT) coordinates GTP. An Effector region motif is present at residues 39 to 47 (YVPTVFENY). GTP contacts are provided by residues 64–68 (DTAGQ) and 122–125 (CKVD). Positions 187-209 (KSKTNGKAKKNTTEKKKKKCVLL) are disordered. Basic residues predominate over residues 190-209 (TNGKAKKNTTEKKKKKCVLL). Cys-206 bears the Cysteine methyl ester mark. Cys-206 is lipidated: S-geranylgeranyl cysteine. A propeptide spans 207 to 209 (VLL) (removed in mature form).

This sequence belongs to the small GTPase superfamily. Rho family. In terms of assembly, interacts with BEM4; the interaction is direct. Interacts with SEC3; the interaction is direct. Interacts with the GAP BAG7. Interacts with the GAP LRG1. Interacts with the GAP SAC7. Interacts with the GAP RDI1. Interacts with the 1,3-beta-glucan synthase component FKS1. Interacts with the protein kinase PKC1. Interacts with the G protein beta subunit STE4. Interacts with SKN7. Interacts with TUS1. Interacts with BNI1.

The protein resides in the cell membrane. It localises to the endosome membrane. It is found in the peroxisome membrane. It catalyses the reaction GTP + H2O = GDP + phosphate + H(+). With respect to regulation, alternates between an inactive form bound to GDP and an active form bound to GTP. Activated by the guanine nucleotide-exchange factors (GEFs) ROM1, ROM2 and TUS1, and inactivated by GTPase-activating proteins (GAPs) BAG7, BEM2, LRG1, and SAC7, and the Rho GDP-dissociation inhibitor RDI1. The different GAPs regulate RHO1 in a target-specific manner. Functionally, acts as a central regulator in the cell wall integrity signaling pathway, which is regulated by the cell cycle and in response to various types of cell wall stress. Integrates signals from different cell surface sensors, and activates a set of effectors, regulating processes including beta-glucan synthesis at the site of wall remodeling, gene expression related to cell wall biogenesis, organization of the actin cytoskeleton, and protein- and secretory vesicle-targeting to the growth site. Activates the protein kinase C (PKC1) MAP kinase cascade, the beta-1,3-glucan synthase (FKS1), the formin BNI1, the exocyst component SEC3 and the transcription factor SKN7. The polypeptide is GTP-binding protein RHO1 (RHO1) (Saccharomyces cerevisiae (strain ATCC 204508 / S288c) (Baker's yeast)).